A 208-amino-acid polypeptide reads, in one-letter code: Glutathione S-transferase 1-1 (208 aa).

The GST N-terminal domain maps to 1-80 (MDFYYLPGSA…YLVEKYGKND (80 aa)). Glutathione contacts are provided by residues serine 9, 50–52 (HTI), and 64–66 (ESR). One can recognise a GST C-terminal domain in the interval 86–207 (CPKKRAVINQ…EGCLEFKKFF (122 aa)).

This sequence belongs to the GST superfamily. Theta family. Homodimer.

It carries out the reaction RX + glutathione = an S-substituted glutathione + a halide anion + H(+). Its function is as follows. Conjugation of reduced glutathione to a wide number of exogenous and endogenous hydrophobic electrophiles. In Lucilia cuprina (Green bottle fly), this protein is Glutathione S-transferase 1-1 (GST1).